The sequence spans 58 residues: Ribosome biogenesis protein Nop10 (58 aa).

This sequence belongs to the NOP10 family.

Involved in ribosome biogenesis; more specifically in 18S rRNA pseudouridylation and in cleavage of pre-rRNA. The protein is Ribosome biogenesis protein Nop10 of Thermococcus onnurineus (strain NA1).